Reading from the N-terminus, the 236-residue chain is Small ribosomal subunit protein eS6 (236 aa).

Phosphoserine occurs at positions 232 and 233.

The protein belongs to the eukaryotic ribosomal protein eS6 family. In terms of processing, phosphorylated.

The protein is Small ribosomal subunit protein eS6 (RPS6) of Eremothecium gossypii (strain ATCC 10895 / CBS 109.51 / FGSC 9923 / NRRL Y-1056) (Yeast).